The sequence spans 379 residues: Glutamate 5-kinase (379 aa).

Lysine 15 is an ATP binding site. Serine 56, aspartate 143, and asparagine 155 together coordinate substrate. 175 to 176 is an ATP binding site; sequence SD. One can recognise a PUA domain in the interval 281 to 358; the sequence is KGTLTIDAGA…CDAAQILGIS (78 aa).

It belongs to the glutamate 5-kinase family.

It is found in the cytoplasm. It carries out the reaction L-glutamate + ATP = L-glutamyl 5-phosphate + ADP. It participates in amino-acid biosynthesis; L-proline biosynthesis; L-glutamate 5-semialdehyde from L-glutamate: step 1/2. Catalyzes the transfer of a phosphate group to glutamate to form L-glutamate 5-phosphate. The protein is Glutamate 5-kinase of Nitrobacter hamburgensis (strain DSM 10229 / NCIMB 13809 / X14).